Reading from the N-terminus, the 314-residue chain is Ornithine carbamoyltransferase (314 aa).

Carbamoyl phosphate contacts are provided by residues 58–61, Gln85, Arg109, and 136–139; these read STRT and HPLQ. L-ornithine is bound by residues Asn168, Asp232, and 236 to 237; that span reads SM. Residues 272–273 and Arg300 each bind carbamoyl phosphate; that span reads CL.

The protein belongs to the aspartate/ornithine carbamoyltransferase superfamily. OTCase family.

The protein localises to the cytoplasm. It catalyses the reaction carbamoyl phosphate + L-ornithine = L-citrulline + phosphate + H(+). The protein operates within amino-acid biosynthesis; L-arginine biosynthesis; L-arginine from L-ornithine and carbamoyl phosphate: step 1/3. Reversibly catalyzes the transfer of the carbamoyl group from carbamoyl phosphate (CP) to the N(epsilon) atom of ornithine (ORN) to produce L-citrulline. The sequence is that of Ornithine carbamoyltransferase from Hyperthermus butylicus (strain DSM 5456 / JCM 9403 / PLM1-5).